The primary structure comprises 459 residues: Bifunctional protein GlmU (459 aa).

The interval 1 to 229 (MTNYAIILAA…FDESLGVNDR (229 aa)) is pyrophosphorylase. Residues 8–11 (LAAG), Lys22, Gln72, and 77–78 (GT) each bind UDP-N-acetyl-alpha-D-glucosamine. Position 102 (Asp102) interacts with Mg(2+). Residues Gly139, Glu154, Asn169, and Asn227 each contribute to the UDP-N-acetyl-alpha-D-glucosamine site. Asn227 contributes to the Mg(2+) binding site. Positions 230–250 (VALATAESVMRRRINQKHMVN) are linker. Positions 251–459 (GVSFVNPDAT…KRLPHHPQNK (209 aa)) are N-acetyltransferase. UDP-N-acetyl-alpha-D-glucosamine-binding residues include Arg332 and Lys350. Catalysis depends on His362, which acts as the Proton acceptor. UDP-N-acetyl-alpha-D-glucosamine is bound by residues Tyr365 and Asn376. Residues Ala379, 385 to 386 (NY), Ser404, Ala422, and Arg439 each bind acetyl-CoA.

It in the N-terminal section; belongs to the N-acetylglucosamine-1-phosphate uridyltransferase family. The protein in the C-terminal section; belongs to the transferase hexapeptide repeat family. Homotrimer. Mg(2+) serves as cofactor.

It is found in the cytoplasm. It catalyses the reaction alpha-D-glucosamine 1-phosphate + acetyl-CoA = N-acetyl-alpha-D-glucosamine 1-phosphate + CoA + H(+). The enzyme catalyses N-acetyl-alpha-D-glucosamine 1-phosphate + UTP + H(+) = UDP-N-acetyl-alpha-D-glucosamine + diphosphate. It functions in the pathway nucleotide-sugar biosynthesis; UDP-N-acetyl-alpha-D-glucosamine biosynthesis; N-acetyl-alpha-D-glucosamine 1-phosphate from alpha-D-glucosamine 6-phosphate (route II): step 2/2. The protein operates within nucleotide-sugar biosynthesis; UDP-N-acetyl-alpha-D-glucosamine biosynthesis; UDP-N-acetyl-alpha-D-glucosamine from N-acetyl-alpha-D-glucosamine 1-phosphate: step 1/1. Its pathway is bacterial outer membrane biogenesis; LPS lipid A biosynthesis. Functionally, catalyzes the last two sequential reactions in the de novo biosynthetic pathway for UDP-N-acetylglucosamine (UDP-GlcNAc). The C-terminal domain catalyzes the transfer of acetyl group from acetyl coenzyme A to glucosamine-1-phosphate (GlcN-1-P) to produce N-acetylglucosamine-1-phosphate (GlcNAc-1-P), which is converted into UDP-GlcNAc by the transfer of uridine 5-monophosphate (from uridine 5-triphosphate), a reaction catalyzed by the N-terminal domain. This chain is Bifunctional protein GlmU, found in Streptococcus gordonii (strain Challis / ATCC 35105 / BCRC 15272 / CH1 / DL1 / V288).